Consider the following 274-residue polypeptide: Eukaryotic translation initiation factor 3 subunit J (274 aa).

2 disordered regions span residues 1 to 120 (MSGK…DLKH) and 227 to 246 (EEKA…TKTS). Positions 30–50 (DEEGNESDVLDSWDAAEDSEV) are enriched in acidic residues. The stretch at 46–112 (EDSEVEREKA…AERRERLRRE (67 aa)) forms a coiled coil. Basic and acidic residues-rich tracts occupy residues 51–67 (EREK…KAEA) and 79–92 (RIAE…RQLA). Residues 93-102 (EDSDAEEETE) are compositionally biased toward acidic residues. Residues 103–120 (AERRERLRREQKESDLKH) show a composition bias toward basic and acidic residues.

Belongs to the eIF-3 subunit J family. In terms of assembly, component of the eukaryotic translation initiation factor 3 (eIF-3) complex.

It localises to the cytoplasm. In terms of biological role, component of the eukaryotic translation initiation factor 3 (eIF-3) complex, which is involved in protein synthesis of a specialized repertoire of mRNAs and, together with other initiation factors, stimulates binding of mRNA and methionyl-tRNAi to the 40S ribosome. The eIF-3 complex specifically targets and initiates translation of a subset of mRNAs involved in cell proliferation. This Neurospora crassa (strain ATCC 24698 / 74-OR23-1A / CBS 708.71 / DSM 1257 / FGSC 987) protein is Eukaryotic translation initiation factor 3 subunit J (hcr-1).